A 348-amino-acid polypeptide reads, in one-letter code: D-erythrose-4-phosphate dehydrogenase (348 aa).

NAD(+) contacts are provided by residues 12-13 (RI) and Arg81. Residues 154 to 156 (SCT), Arg200, 213 to 214 (TK), and Arg236 each bind substrate. The active-site Nucleophile is Cys155. Asn318 contributes to the NAD(+) binding site.

This sequence belongs to the glyceraldehyde-3-phosphate dehydrogenase family. Epd subfamily. Homotetramer.

Its subcellular location is the cytoplasm. It carries out the reaction D-erythrose 4-phosphate + NAD(+) + H2O = 4-phospho-D-erythronate + NADH + 2 H(+). It functions in the pathway cofactor biosynthesis; pyridoxine 5'-phosphate biosynthesis; pyridoxine 5'-phosphate from D-erythrose 4-phosphate: step 1/5. Functionally, catalyzes the NAD-dependent conversion of D-erythrose 4-phosphate to 4-phosphoerythronate. This chain is D-erythrose-4-phosphate dehydrogenase, found in Salmonella dublin (strain CT_02021853).